The following is a 181-amino-acid chain: HGPRTase-like protein 2 (181 aa).

Belongs to the purine/pyrimidine phosphoribosyltransferase family. Archaeal HPRT subfamily.

Its function is as follows. May catalyze a purine salvage reaction, the substrate is unknown. This is HGPRTase-like protein 2 from Haloterrigena turkmenica (strain ATCC 51198 / DSM 5511 / JCM 9101 / NCIMB 13204 / VKM B-1734 / 4k) (Halococcus turkmenicus).